The following is a 96-amino-acid chain: uncharacterized protein (96 aa).

Residues 13 to 35 (PVVRYVVALLHWLLWRVVVIIAI) form a helical membrane-spanning segment.

Its subcellular location is the membrane. This is an uncharacterized protein from Archaeoglobus fulgidus (strain ATCC 49558 / DSM 4304 / JCM 9628 / NBRC 100126 / VC-16).